Consider the following 475-residue polypeptide: ATP synthase subunit beta (475 aa).

Position 155-162 (155-162 (GGAGVGKT)) interacts with ATP.

It belongs to the ATPase alpha/beta chains family. In terms of assembly, F-type ATPases have 2 components, CF(1) - the catalytic core - and CF(0) - the membrane proton channel. CF(1) has five subunits: alpha(3), beta(3), gamma(1), delta(1), epsilon(1). CF(0) has three main subunits: a(1), b(2) and c(9-12). The alpha and beta chains form an alternating ring which encloses part of the gamma chain. CF(1) is attached to CF(0) by a central stalk formed by the gamma and epsilon chains, while a peripheral stalk is formed by the delta and b chains.

The protein localises to the cell inner membrane. It carries out the reaction ATP + H2O + 4 H(+)(in) = ADP + phosphate + 5 H(+)(out). Produces ATP from ADP in the presence of a proton gradient across the membrane. The catalytic sites are hosted primarily by the beta subunits. The protein is ATP synthase subunit beta of Rhizobium etli (strain ATCC 51251 / DSM 11541 / JCM 21823 / NBRC 15573 / CFN 42).